A 479-amino-acid polypeptide reads, in one-letter code: Poly(A) polymerase catalytic subunit (479 aa).

Catalysis depends on residues Asp-202 and Asp-204. Positions 202, 204, and 253 each coordinate Ca(2+).

The protein belongs to the poxviridae poly(A) polymerase catalytic subunit family. Heterodimer of a large (catalytic) subunit and a small (regulatory) subunit.

It catalyses the reaction RNA(n) + ATP = RNA(n)-3'-adenine ribonucleotide + diphosphate. Polymerase that creates the 3'-poly(A) tail of mRNA's. The protein is Poly(A) polymerase catalytic subunit (OPG063) of Camelus.